Reading from the N-terminus, the 261-residue chain is Cytochrome c oxidase subunit 3 (261 aa).

At 1-15 the chain is on the mitochondrial matrix side; the sequence is MTHQTHAYHMVNPSP. Residues 16–34 form a helical membrane-spanning segment; the sequence is WPLTGALSALLMTFGLIMW. The Mitochondrial intermembrane segment spans residues 35–40; it reads FHFNST. Residues 41-66 traverse the membrane as a helical segment; it reads ALLMLGLTTNMLTMYQWWRDIIREST. Topologically, residues 67–72 are mitochondrial matrix; sequence FQGHHT. A helical transmembrane segment spans residues 73–105; the sequence is PVVQKGLRYGMILFIISEVLFFTGFFWAFYHSS. Residues 106–128 lie on the Mitochondrial intermembrane side of the membrane; that stretch reads LAPTPELGGCWPPTGIHPLNPLE. A helical transmembrane segment spans residues 129–152; sequence VPLLNTSVLLASGVSITWAHHSLM. Over 153 to 155 the chain is Mitochondrial matrix; that stretch reads EGH. Residues 156-183 form a helical membrane-spanning segment; the sequence is RNHMLQALFITIALGVYFTLLQASEYYE. Residues 184-190 are Mitochondrial intermembrane-facing; the sequence is APFTISD. The helical transmembrane segment at 191–223 threads the bilayer; that stretch reads GVYGSTFFVATGFHGLHVIIGSTFLIVCFFRQL. The Mitochondrial matrix segment spans residues 224-232; the sequence is KFHFTSSHH. Residues 233-256 form a helical membrane-spanning segment; it reads FGFEAAAWYWHFVDVVWLFLYVSI. Over 257–261 the chain is Mitochondrial intermembrane; that stretch reads YWWGS.

It belongs to the cytochrome c oxidase subunit 3 family. As to quaternary structure, component of the cytochrome c oxidase (complex IV, CIV), a multisubunit enzyme composed of 14 subunits. The complex is composed of a catalytic core of 3 subunits MT-CO1, MT-CO2 and MT-CO3, encoded in the mitochondrial DNA, and 11 supernumerary subunits COX4I, COX5A, COX5B, COX6A, COX6B, COX6C, COX7A, COX7B, COX7C, COX8 and NDUFA4, which are encoded in the nuclear genome. The complex exists as a monomer or a dimer and forms supercomplexes (SCs) in the inner mitochondrial membrane with NADH-ubiquinone oxidoreductase (complex I, CI) and ubiquinol-cytochrome c oxidoreductase (cytochrome b-c1 complex, complex III, CIII), resulting in different assemblies (supercomplex SCI(1)III(2)IV(1) and megacomplex MCI(2)III(2)IV(2)).

Its subcellular location is the mitochondrion inner membrane. It carries out the reaction 4 Fe(II)-[cytochrome c] + O2 + 8 H(+)(in) = 4 Fe(III)-[cytochrome c] + 2 H2O + 4 H(+)(out). Its function is as follows. Component of the cytochrome c oxidase, the last enzyme in the mitochondrial electron transport chain which drives oxidative phosphorylation. The respiratory chain contains 3 multisubunit complexes succinate dehydrogenase (complex II, CII), ubiquinol-cytochrome c oxidoreductase (cytochrome b-c1 complex, complex III, CIII) and cytochrome c oxidase (complex IV, CIV), that cooperate to transfer electrons derived from NADH and succinate to molecular oxygen, creating an electrochemical gradient over the inner membrane that drives transmembrane transport and the ATP synthase. Cytochrome c oxidase is the component of the respiratory chain that catalyzes the reduction of oxygen to water. Electrons originating from reduced cytochrome c in the intermembrane space (IMS) are transferred via the dinuclear copper A center (CU(A)) of subunit 2 and heme A of subunit 1 to the active site in subunit 1, a binuclear center (BNC) formed by heme A3 and copper B (CU(B)). The BNC reduces molecular oxygen to 2 water molecules using 4 electrons from cytochrome c in the IMS and 4 protons from the mitochondrial matrix. The chain is Cytochrome c oxidase subunit 3 (MT-CO3) from Tragelaphus oryx (Eland).